Reading from the N-terminus, the 31-residue chain is U8-ctenitoxin-Co1a (31 aa).

Cystine bridges form between C4–C18 and C11–C24.

Expressed by the venom gland.

Its subcellular location is the secreted. Blocks voltage-gated sodium channels (Nav). This chain is U8-ctenitoxin-Co1a, found in Ctenus ornatus (Brazilian spider).